The primary structure comprises 25 residues: Antithrombin-III (25 aa).

It belongs to the serpin family. In terms of assembly, forms protease inhibiting heterodimer with TMPRSS7. In terms of processing, phosphorylated by FAM20C in the extracellular medium. As to expression, plasma.

Its subcellular location is the secreted. The protein resides in the extracellular space. Functionally, most important serine protease inhibitor in plasma that regulates the blood coagulation cascade. AT-III inhibits thrombin, matriptase-3/TMPRSS7, as well as factors IXa, Xa and XIa. Its inhibitory activity is greatly enhanced in the presence of heparin. The chain is Antithrombin-III (SERPINC1) from Mesocricetus auratus (Golden hamster).